A 120-amino-acid polypeptide reads, in one-letter code: NAD(P)H-quinone oxidoreductase subunit 3, chloroplastic (120 aa).

3 consecutive transmembrane segments (helical) span residues 9-29 (IFWA…LISG), 64-84 (MFAL…PWAM), and 88-108 (VLGV…IVGS).

The protein belongs to the complex I subunit 3 family. In terms of assembly, NDH is composed of at least 16 different subunits, 5 of which are encoded in the nucleus.

It is found in the plastid. The protein resides in the chloroplast thylakoid membrane. It carries out the reaction a plastoquinone + NADH + (n+1) H(+)(in) = a plastoquinol + NAD(+) + n H(+)(out). The enzyme catalyses a plastoquinone + NADPH + (n+1) H(+)(in) = a plastoquinol + NADP(+) + n H(+)(out). Its function is as follows. NDH shuttles electrons from NAD(P)H:plastoquinone, via FMN and iron-sulfur (Fe-S) centers, to quinones in the photosynthetic chain and possibly in a chloroplast respiratory chain. The immediate electron acceptor for the enzyme in this species is believed to be plastoquinone. Couples the redox reaction to proton translocation, and thus conserves the redox energy in a proton gradient. This Acorus calamus var. americanus (American sweet flag) protein is NAD(P)H-quinone oxidoreductase subunit 3, chloroplastic.